The sequence spans 410 residues: MVRINENYLKLKAGYLFPEIARRVNGFLAENPNAPIIKLGIGDVTEPLPAACREAMAKAIDDMGDRANFKGYGPEQGYAWLREKIAAHDFQARGCDIDASEIFVSDGAKCDTGNILDIFGKDNTIAVTDPVYPVYVDTNVMAGHTGEADESGKYGGLTYIPITADNDFVAQIPTEKVDLIYLCFPNNPTGATATKEQLQAWVDYAKTNGSIIFFDAAYEAFITDESLPHSIYELEGAKDCAIEFRSFSKNAGFTGTRCAFTVVPKNLTVTASNGQAVQLWSLWNRRQSTKFNGVSYIVQRGAEAVYSEAGQAQIKTLIDFYLENAAIIRRELQAVGFDVYGGVNAPYVWVKTPAGLSSWDFFDKLLINCNVVGTPGSGFGAAGEGYFRISAFNSRENVLEAMKRITTAFQ.

Tyr15 and Gly42 together coordinate substrate. Residues Tyr72, 108 to 109 (AK), Tyr132, Asn187, Tyr218, and 246 to 248 (SFS) each bind pyridoxal 5'-phosphate. The substrate site is built by Lys109, Tyr132, and Asn187. N6-(pyridoxal phosphate)lysine is present on Lys249. Arg257 and Asn292 together coordinate pyridoxal 5'-phosphate. Substrate is bound by residues Asn292 and Arg388.

It belongs to the class-I pyridoxal-phosphate-dependent aminotransferase family. LL-diaminopimelate aminotransferase subfamily. In terms of assembly, homodimer. Requires pyridoxal 5'-phosphate as cofactor.

It carries out the reaction (2S,6S)-2,6-diaminopimelate + 2-oxoglutarate = (S)-2,3,4,5-tetrahydrodipicolinate + L-glutamate + H2O + H(+). Its pathway is amino-acid biosynthesis; L-lysine biosynthesis via DAP pathway; LL-2,6-diaminopimelate from (S)-tetrahydrodipicolinate (aminotransferase route): step 1/1. Involved in the synthesis of meso-diaminopimelate (m-DAP or DL-DAP), required for both lysine and peptidoglycan biosynthesis. Catalyzes the direct conversion of tetrahydrodipicolinate to LL-diaminopimelate. This is LL-diaminopimelate aminotransferase from Picosynechococcus sp. (strain ATCC 27264 / PCC 7002 / PR-6) (Agmenellum quadruplicatum).